The primary structure comprises 147 residues: MSQGSKPTSSDIAINQRVGATVEGFRVVSTRLRSAEYESFSHQARLLGLSDSMAIRVAVRRIGGFLEIDAETRHKMEAILLSIGTLSSNIAALLSAYAENPTMDLEALRAERIAFGESFADLDGLLRSILSVSRRRIDGCSMLKDSL.

In terms of biological role, tumor formation by A.tumefaciens involves the transfer and integration of a defined segment (T-DNA) of Ti plasmid DNA into the plant nuclear genome. The virD operon encodes a site-specific endonuclease that cleaves at a unique site within both 24 bp direct repeats flanking the T-DNA. The chain is T-DNA border endonuclease VirD1 (virD1) from Rhizobium rhizogenes (Agrobacterium rhizogenes).